The following is a 154-amino-acid chain: Putative antiporter subunit mnhG2 (154 aa).

3 helical membrane-spanning segments follow: residues 11 to 31, 51 to 71, and 72 to 92; these read IASI…IGIV, VLLT…FFSV, and RLLL…HLIS.

Belongs to the CPA3 antiporters (TC 2.A.63) subunit G family. As to quaternary structure, may form a heterooligomeric complex that consists of seven subunits: mnhA2, mnhB2, mnhC2, mnhD2, mnhE2, mnhF2 and mnhG2.

It is found in the cell membrane. This is Putative antiporter subunit mnhG2 (mnhG2) from Staphylococcus epidermidis (strain ATCC 35984 / DSM 28319 / BCRC 17069 / CCUG 31568 / BM 3577 / RP62A).